The sequence spans 140 residues: uncharacterized protein (140 aa).

This is an uncharacterized protein from Fowlpox virus (strain NVSL) (FPV).